We begin with the raw amino-acid sequence, 127 residues long: Apolipoprotein C-IV (127 aa).

The N-terminal stretch at 1–27 (MSLLRNRLQDLPALCLCVLVLACIGAC) is a signal peptide. Asparagine 63 is a glycosylation site (N-linked (GlcNAc...) asparagine).

The protein belongs to the apolipoprotein C4 family.

It localises to the secreted. In terms of biological role, may participate in lipoprotein metabolism. This is Apolipoprotein C-IV (APOC4) from Colobus guereza (Mantled guereza).